A 184-amino-acid chain; its full sequence is Ribosome-recycling factor (184 aa).

Belongs to the RRF family.

The protein localises to the cytoplasm. Responsible for the release of ribosomes from messenger RNA at the termination of protein biosynthesis. May increase the efficiency of translation by recycling ribosomes from one round of translation to another. The chain is Ribosome-recycling factor from Clostridium botulinum (strain Loch Maree / Type A3).